The chain runs to 92 residues: N(2)-fixation sustaining protein CowN (92 aa).

It belongs to the CowN family.

Is required to sustain N(2)-dependent growth in the presence of low levels of carbon monoxide (CO). Probably acts by protecting the N(2) fixation ability of the nitrogenase complex, which is inactivated in the presence of CO. This Rhodopseudomonas palustris (strain HaA2) protein is N(2)-fixation sustaining protein CowN.